Reading from the N-terminus, the 203-residue chain is MKIKHWDRWLASLKDDDYLKNIEAIKLYLAVMSIYEPDLLDEYMIDDDFHPMISRLKNVTLDVTSARFKELYITESKMNYARDELDGAMIISKTLTKSDIVGNVALPKAQVMSVLTRMNGVTDEGLDNGFEVQVHDIMEDDLYTVTLKRIDDMKYYFGTGWSTMKHSLDLVEGDVQKLYWDQFENKFIVLNFQHKTMGIMIPV.

The TF-B3 DNA-binding region spans 99-195 (DIVGNVALPK…KFIVLNFQHK (97 aa)).

It is found in the nucleus. The polypeptide is Putative B3 domain-containing protein At1g50220 (Arabidopsis thaliana (Mouse-ear cress)).